A 340-amino-acid chain; its full sequence is Phosphate acyltransferase (340 aa).

Belongs to the PlsX family. Homodimer. Probably interacts with PlsY.

It localises to the cytoplasm. It catalyses the reaction a fatty acyl-[ACP] + phosphate = an acyl phosphate + holo-[ACP]. It functions in the pathway lipid metabolism; phospholipid metabolism. In terms of biological role, catalyzes the reversible formation of acyl-phosphate (acyl-PO(4)) from acyl-[acyl-carrier-protein] (acyl-ACP). This enzyme utilizes acyl-ACP as fatty acyl donor, but not acyl-CoA. The protein is Phosphate acyltransferase of Pseudomonas syringae pv. tomato (strain ATCC BAA-871 / DC3000).